Reading from the N-terminus, the 317-residue chain is tRNA(Met) cytidine acetate ligase (317 aa).

ATP-binding positions include 6-19 (IAEY…HIYQ), G100, N157, and R182.

It belongs to the TmcAL family.

It localises to the cytoplasm. The catalysed reaction is cytidine(34) in elongator tRNA(Met) + acetate + ATP = N(4)-acetylcytidine(34) in elongator tRNA(Met) + AMP + diphosphate. Its function is as follows. Catalyzes the formation of N(4)-acetylcytidine (ac(4)C) at the wobble position of elongator tRNA(Met), using acetate and ATP as substrates. First activates an acetate ion to form acetyladenylate (Ac-AMP) and then transfers the acetyl group to tRNA to form ac(4)C34. The sequence is that of tRNA(Met) cytidine acetate ligase from Mesomycoplasma hyopneumoniae (strain J / ATCC 25934 / NCTC 10110) (Mycoplasma hyopneumoniae).